Reading from the N-terminus, the 266-residue chain is NADP-dependent mannitol dehydrogenase (266 aa).

Residues Ser53, Asn107, and Lys140 each coordinate NADP(+). Catalysis depends on Ser159, which acts as the Proton donor. NADP(+) contacts are provided by Tyr174, Lys178, Ile206, and Thr208. Tyr174 acts as the Proton acceptor in catalysis. Lys178 (lowers pKa of active site Tyr) is an active-site residue.

The protein belongs to the short-chain dehydrogenases/reductases (SDR) family. In terms of assembly, homotetramer.

The catalysed reaction is D-mannitol + NADP(+) = D-fructose + NADPH + H(+). In terms of biological role, D-mannitol 2-dehydrogenase which is not necessary for D-mannitol catabolism. D-mannitol metabolism occurs via at least two different routes involving mannitol dehydrogenase (MDH) or mannitol 1-phosphate dehydrogenase, and the exact physiological role of mannitol dehydrogenases remains unclear. This chain is NADP-dependent mannitol dehydrogenase, found in Hypocrea jecorina (strain ATCC 56765 / BCRC 32924 / NRRL 11460 / Rut C-30) (Trichoderma reesei).